The following is a 379-amino-acid chain: Cytochrome b (379 aa).

The next 4 helical transmembrane spans lie at 33–53 (FGSL…FLAM), 77–98 (WLIR…FIHV), 113–133 (WNIG…GYVL), and 178–198 (FFAF…VHLL). Residues histidine 83 and histidine 97 each contribute to the heme b site. Heme b is bound by residues histidine 182 and histidine 196. A ubiquinone is bound at residue histidine 201. The next 4 helical transmembrane spans lie at 226–246 (IKDL…ALFF), 288–308 (LGGV…PLLN), 320–340 (ITQT…WIGG), and 347–367 (FTTI…IIMP).

The protein belongs to the cytochrome b family. The cytochrome bc1 complex contains 11 subunits: 3 respiratory subunits (MT-CYB, CYC1 and UQCRFS1), 2 core proteins (UQCRC1 and UQCRC2) and 6 low-molecular weight proteins (UQCRH/QCR6, UQCRB/QCR7, UQCRQ/QCR8, UQCR10/QCR9, UQCR11/QCR10 and a cleavage product of UQCRFS1). This cytochrome bc1 complex then forms a dimer. It depends on heme b as a cofactor.

The protein localises to the mitochondrion inner membrane. Functionally, component of the ubiquinol-cytochrome c reductase complex (complex III or cytochrome b-c1 complex) that is part of the mitochondrial respiratory chain. The b-c1 complex mediates electron transfer from ubiquinol to cytochrome c. Contributes to the generation of a proton gradient across the mitochondrial membrane that is then used for ATP synthesis. The chain is Cytochrome b (MT-CYB) from Deltamys kempi (Kemp's grass mouse).